Reading from the N-terminus, the 364-residue chain is Molybdenum import ATP-binding protein ModC (364 aa).

The 229-residue stretch at Met1–Ser229 folds into the ABC transporter domain. Residue Gly31–Ser38 coordinates ATP. A Mop domain is found at His293–Asp360.

It belongs to the ABC transporter superfamily. Molybdate importer (TC 3.A.1.8) family. The complex is composed of two ATP-binding proteins (ModC), two transmembrane proteins (ModB) and a solute-binding protein (ModA).

The protein resides in the cell inner membrane. The catalysed reaction is molybdate(out) + ATP + H2O = molybdate(in) + ADP + phosphate + H(+). Functionally, part of the ABC transporter complex ModABC involved in molybdenum import. Responsible for energy coupling to the transport system. In Aliivibrio fischeri (strain ATCC 700601 / ES114) (Vibrio fischeri), this protein is Molybdenum import ATP-binding protein ModC.